The following is a 323-amino-acid chain: Methenyltetrahydromethanopterin cyclohydrolase (323 aa).

Belongs to the MCH family.

The protein resides in the cytoplasm. It catalyses the reaction 5,10-methenyl-5,6,7,8-tetrahydromethanopterin + H2O = N(5)-formyl-5,6,7,8-tetrahydromethanopterin + H(+). It participates in one-carbon metabolism; methanogenesis from CO(2); 5,10-methenyl-5,6,7,8-tetrahydromethanopterin from CO(2): step 3/3. In terms of biological role, catalyzes the reversible interconversion of 5-formyl-H(4)MPT to methenyl-H(4)MPT(+). In Methanobrevibacter smithii (strain ATCC 35061 / DSM 861 / OCM 144 / PS), this protein is Methenyltetrahydromethanopterin cyclohydrolase.